A 264-amino-acid chain; its full sequence is Thymidylate synthase (264 aa).

Residue Arg-21 coordinates dUMP. (6R)-5,10-methylene-5,6,7,8-tetrahydrofolate is bound at residue His-51. 126–127 contacts dUMP; sequence RR. Cys-146 (nucleophile) is an active-site residue. DUMP-binding positions include 166–169, Asn-177, and 207–209; these read RSCD and HLY. Asp-169 contributes to the (6R)-5,10-methylene-5,6,7,8-tetrahydrofolate binding site. Ala-263 lines the (6R)-5,10-methylene-5,6,7,8-tetrahydrofolate pocket.

This sequence belongs to the thymidylate synthase family. Bacterial-type ThyA subfamily. In terms of assembly, homodimer.

Its subcellular location is the cytoplasm. The catalysed reaction is dUMP + (6R)-5,10-methylene-5,6,7,8-tetrahydrofolate = 7,8-dihydrofolate + dTMP. Its pathway is pyrimidine metabolism; dTTP biosynthesis. Catalyzes the reductive methylation of 2'-deoxyuridine-5'-monophosphate (dUMP) to 2'-deoxythymidine-5'-monophosphate (dTMP) while utilizing 5,10-methylenetetrahydrofolate (mTHF) as the methyl donor and reductant in the reaction, yielding dihydrofolate (DHF) as a by-product. This enzymatic reaction provides an intracellular de novo source of dTMP, an essential precursor for DNA biosynthesis. In Shewanella baltica (strain OS185), this protein is Thymidylate synthase.